Reading from the N-terminus, the 912-residue chain is uncharacterized protein (912 aa).

Composition is skewed to basic and acidic residues over residues 20–32 and 39–67; these read IERLREQGRAEPA and HEYEHTQGSRSHSSKDGSRKDRMSSEDKT. Residues 20–91 form a disordered region; that stretch reads IERLREQGRA…KPTLPQPETD (72 aa). Residues 68-77 show a composition bias toward basic residues; sequence RHKKLKHRSR.

This is an uncharacterized protein from Penicillium chrysogenum virus (isolate Caston/2003) (PcV).